A 317-amino-acid polypeptide reads, in one-letter code: Taste receptor type 2 member 14 (317 aa).

The Extracellular portion of the chain corresponds to 1–7 (MGGVIKS). Residues 8–28 (IFTFVLIVEFIIGNLGNSFIA) form a helical membrane-spanning segment. The Cytoplasmic portion of the chain corresponds to 29–55 (LVNCIDWVKGRKISSVDRILTALAISK). A helical membrane pass occupies residues 56–76 (ISLVWLIFGSWCVSVFFPALF). At 77–87 (ATEKMFRMLTN) the chain is on the extracellular side. Cholesterol is bound by residues threonine 86 and tryptophan 89. The chain crosses the membrane as a helical span at residues 88–108 (IWTVINHFSVWLATGLGTFYF). At 109 to 129 (LKIANFSNSIFLYLKWRVKKV) the chain is on the cytoplasmic side. The chain crosses the membrane as a helical span at residues 130–150 (VLVLLLVTSVFLFLNIALINI). The Extracellular segment spans residues 151–184 (HINASINGYRRNKTCSSDSSNFTRFSSLIVLTST). Residues asparagine 153, asparagine 162, and asparagine 171 are each glycosylated (N-linked (GlcNAc...) asparagine). Valine 180 is a cholesterol binding site. The helical transmembrane segment at 185 to 205 (VFIFIPFTLSLAMFLLLIFSX) threads the bilayer. Topologically, residues 206 to 232 (WKHRKKMQHTVKRSGDASTKAHRGVKS) are cytoplasmic. Residues 233 to 253 (VXTFFLLYAIFCLSFFISVWT) form a helical membrane-spanning segment. Residues 254-261 (SERLEENL) are Extracellular-facing. A helical membrane pass occupies residues 262 to 282 (IILSQVMGMAYPSCHSCVLIL). Cholesterol-binding residues include serine 265 and methionine 268. The Cytoplasmic segment spans residues 283–317 (GNKKLRQASLSVLLWLRYMFKDGEPSGHKEFRESS).

Belongs to the G-protein coupled receptor T2R family. In terms of assembly, core component of the TAS2R14-GNAI1 complex, consisting of TAS2R14, GNAI1, GNB1 and GNG2; within the complex interacts with GNAI1. Core component of the TAS2R14-GNAT3 complex, consisting of TAS2R14, GNAT3, GNB1 and GNG2; within the complex interacts with GNAT3. Core component of the TAS2R14-GNAS2 complex, consisting of TAS2R14, GNAS2, GNB1 and GNG2; within the complex interacts with GNAS2.

The protein localises to the membrane. It catalyses the reaction Ca(2+)(in) = Ca(2+)(out). The catalysed reaction is 3',5'-cyclic AMP(in) = 3',5'-cyclic AMP(out). With respect to regulation, basal activity is enhanced by binding to bitter tastants, such as flufenamic acid and aristolochic acid. Regulated by cholesterol in a concentration-dependent manner. Functionally, gustducin-linked G-protein coupled receptor that plays a role in the perception of bitterness. The activity of this receptor stimulates GNAT3, activating the gustducin G-protein pathway. Likely plays a role in sensing the chemical composition of the gastrointestinal content and other extra-oral tissues via the inhibitory G-protein pathways. The protein is Taste receptor type 2 member 14 (TAS2R14) of Pan troglodytes (Chimpanzee).